The primary structure comprises 331 residues: Ferredoxin--NADP reductase (331 aa).

FAD-binding residues include Thr-20, Glu-39, Gln-47, Tyr-52, Val-92, Phe-126, Asp-287, and Ser-328.

It belongs to the ferredoxin--NADP reductase type 2 family. As to quaternary structure, homodimer. Requires FAD as cofactor.

It catalyses the reaction 2 reduced [2Fe-2S]-[ferredoxin] + NADP(+) + H(+) = 2 oxidized [2Fe-2S]-[ferredoxin] + NADPH. The sequence is that of Ferredoxin--NADP reductase from Bacillus cereus (strain ZK / E33L).